Consider the following 349-residue polypeptide: UDP-N-acetylenolpyruvoylglucosamine reductase (349 aa).

One can recognise an FAD-binding PCMH-type domain in the interval 25 to 213; the sequence is VGPVARRLVT…VEQGERTDPQ (189 aa). Arg165 is an active-site residue. Ser242 functions as the Proton donor in the catalytic mechanism. Glu341 is a catalytic residue.

It belongs to the MurB family. Requires FAD as cofactor.

Its subcellular location is the cytoplasm. It catalyses the reaction UDP-N-acetyl-alpha-D-muramate + NADP(+) = UDP-N-acetyl-3-O-(1-carboxyvinyl)-alpha-D-glucosamine + NADPH + H(+). It functions in the pathway cell wall biogenesis; peptidoglycan biosynthesis. Functionally, cell wall formation. The chain is UDP-N-acetylenolpyruvoylglucosamine reductase from Mycolicibacterium gilvum (strain PYR-GCK) (Mycobacterium gilvum (strain PYR-GCK)).